The sequence spans 140 residues: uncharacterized protein (140 aa).

Transmembrane regions (helical) follow at residues 4–24 (LLLAGWIFFILLSVCTESFSG), 56–76 (EAFIQKIGHAFSFFVLTYLLW), 84–104 (SAAAGSFAFAFFTEVLQLFFS), and 109–129 (IRDVLIDAVGIGLFYGLYVLA).

The protein localises to the cell membrane. In terms of biological role, may be important for peptidoglycan remodeling. This is an uncharacterized protein from Bacillus subtilis (strain 168).